Here is a 182-residue protein sequence, read N- to C-terminus: Adenine phosphoribosyltransferase (182 aa).

Belongs to the purine/pyrimidine phosphoribosyltransferase family. Homodimer.

The protein resides in the cytoplasm. It catalyses the reaction AMP + diphosphate = 5-phospho-alpha-D-ribose 1-diphosphate + adenine. It participates in purine metabolism; AMP biosynthesis via salvage pathway; AMP from adenine: step 1/1. Its function is as follows. Catalyzes a salvage reaction resulting in the formation of AMP, that is energically less costly than de novo synthesis. The protein is Adenine phosphoribosyltransferase of Campylobacter jejuni subsp. doylei (strain ATCC BAA-1458 / RM4099 / 269.97).